The following is a 343-amino-acid chain: Protein RecA (343 aa).

An ATP-binding site is contributed by Gly-64–Thr-71.

The protein belongs to the RecA family.

The protein resides in the cytoplasm. Functionally, can catalyze the hydrolysis of ATP in the presence of single-stranded DNA, the ATP-dependent uptake of single-stranded DNA by duplex DNA, and the ATP-dependent hybridization of homologous single-stranded DNAs. It interacts with LexA causing its activation and leading to its autocatalytic cleavage. The sequence is that of Protein RecA from Acidiphilium cryptum (strain JF-5).